The primary structure comprises 466 residues: MTITELWALIPLLILACGSVFVLMLGAIVPGRCGTVIGVAVCAGTALWAMLAPPQPLAPPTLGVTVTPFTRFFLVFFAVTAGLSLLLARDHAARQGLKGEEYPATILFGTFGMGVVASAANFLTLFLGLEALTFAFYILVAYDHNRPASGEAGLKYLLMGAVSAAFVAFGIALLYGATGTLEISRAVAASAAGGGIALAGWGLLLAGLAFKISLAPAHLWTPDIYQGGPTPVVAFLASGSKGAAIALFLLILSPLGTLGTLRAPLWGLAFLSMTVGNLAALLQPNVKRMLAYSSVAQMGYVALALLSGGRGYEAAAFYAVAYGAMVLAAFGALASLEGETPLEQVDDLRGLGYHRPFQGVVLAVAMLALAGIPPTVGFVGKFAIFFAALKGGEAPLAVIGILTAAASAYYYLRVVVNLYMKPADETGSGQRPTVAEALSLGIAALAIFILGIWPGPLFDLAAAILR.

14 helical membrane passes run 9–29 (LIPL…GAIV), 33–53 (CGTV…MLAP), 68–88 (PFTR…LLLA), 100–120 (EEYP…ASAA), 122–142 (FLTL…LVAY), 157–177 (LLMG…LYGA), 190–210 (SAAG…GLAF), 232–252 (VVAF…LLIL), 263–283 (APLW…ALLQ), 289–309 (MLAY…LSGG), 314–334 (AAAF…GALA), 359–379 (GVVL…VGFV), 394–416 (APLA…RVVV), and 438–458 (LSLG…GPLF).

This sequence belongs to the complex I subunit 2 family. In terms of assembly, NDH-1 is composed of 14 different subunits. Subunits NuoA, H, J, K, L, M, N constitute the membrane sector of the complex.

The protein localises to the cell inner membrane. It catalyses the reaction a quinone + NADH + 5 H(+)(in) = a quinol + NAD(+) + 4 H(+)(out). Its function is as follows. NDH-1 shuttles electrons from NADH, via FMN and iron-sulfur (Fe-S) centers, to quinones in the respiratory chain. The immediate electron acceptor for the enzyme in this species is believed to be ubiquinone. Couples the redox reaction to proton translocation (for every two electrons transferred, four hydrogen ions are translocated across the cytoplasmic membrane), and thus conserves the redox energy in a proton gradient. The polypeptide is NADH-quinone oxidoreductase subunit N (Geobacter metallireducens (strain ATCC 53774 / DSM 7210 / GS-15)).